Here is a 94-residue protein sequence, read N- to C-terminus: Conotoxin Im026 (94 aa).

The signal sequence occupies residues Met-1–Gly-24. Residues Asp-25–Arg-59 constitute a propeptide that is removed on maturation.

Post-translationally, contains 4 disulfide bonds. In terms of tissue distribution, expressed by the venom duct.

Its subcellular location is the secreted. Functionally, probable neurotoxin. This chain is Conotoxin Im026, found in Conus imperialis (Imperial cone).